The sequence spans 276 residues: Shikimate dehydrogenase (NADP(+)) (276 aa).

Residues 18–20 (SKS) and Thr65 contribute to the shikimate site. Lys69 serves as the catalytic Proton acceptor. Glu81 provides a ligand contact to NADP(+). 2 residues coordinate shikimate: Asn90 and Asp106. NADP(+) is bound by residues 130–134 (GAGGA), 154–159 (NRTSSK), and Met217. Tyr219 provides a ligand contact to shikimate. Gly241 lines the NADP(+) pocket.

Belongs to the shikimate dehydrogenase family. As to quaternary structure, homodimer.

The catalysed reaction is shikimate + NADP(+) = 3-dehydroshikimate + NADPH + H(+). Its pathway is metabolic intermediate biosynthesis; chorismate biosynthesis; chorismate from D-erythrose 4-phosphate and phosphoenolpyruvate: step 4/7. Functionally, involved in the biosynthesis of the chorismate, which leads to the biosynthesis of aromatic amino acids. Catalyzes the reversible NADPH linked reduction of 3-dehydroshikimate (DHSA) to yield shikimate (SA). The protein is Shikimate dehydrogenase (NADP(+)) of Vibrio atlanticus (strain LGP32) (Vibrio splendidus (strain Mel32)).